The primary structure comprises 133 residues: Fluoride-specific ion channel FluC 3 (133 aa).

Helical transmembrane passes span 7-27 (ILVL…SGYV), 37-57 (WGTF…AGLG), and 60-80 (LGAI…LLGG). 2 residues coordinate Na(+): G79 and T82. Residues 107–127 (IVASALLCVLAVAAGYGGIMW) form a helical membrane-spanning segment.

Belongs to the fluoride channel Fluc/FEX (TC 1.A.43) family.

It localises to the cell inner membrane. It catalyses the reaction fluoride(in) = fluoride(out). Na(+) is not transported, but it plays an essential structural role and its presence is essential for fluoride channel function. Its function is as follows. Fluoride-specific ion channel. Important for reducing fluoride concentration in the cell, thus reducing its toxicity. This Brucella suis biovar 1 (strain 1330) protein is Fluoride-specific ion channel FluC 3.